Reading from the N-terminus, the 126-residue chain is Basic phospholipase A2 1 (126 aa).

The propeptide occupies 1-7 (SNRPMPL). Intrachain disulfides connect C18–C78, C33–C125, C35–C51, C50–C106, C57–C99, C67–C92, and C85–C97. Ca(2+) is bound by residues Y34, G36, and G38. H54 is an active-site residue. D55 is a Ca(2+) binding site. The active site involves D100.

Belongs to the phospholipase A2 family. Group I subfamily. D49 sub-subfamily. As to quaternary structure, heterodimer formed between two homologous isoforms: isoform 1 and isoform 2. The cofactor is Ca(2+). Expressed by the venom gland.

It localises to the secreted. It carries out the reaction a 1,2-diacyl-sn-glycero-3-phosphocholine + H2O = a 1-acyl-sn-glycero-3-phosphocholine + a fatty acid + H(+). PLA2 catalyzes the calcium-dependent hydrolysis of the 2-acyl groups in 3-sn-phosphoglycerides. The chain is Basic phospholipase A2 1 from Naja sagittifera (Andaman cobra).